We begin with the raw amino-acid sequence, 79 residues long: UPF0180 protein BCAH820_1484 (79 aa).

The protein belongs to the UPF0180 family.

The protein is UPF0180 protein BCAH820_1484 of Bacillus cereus (strain AH820).